The chain runs to 188 residues: Elongation factor P (188 aa).

N6-(3,6-diaminohexanoyl)-5-hydroxylysine is present on lysine 34.

It belongs to the elongation factor P family. Post-translationally, may be beta-lysylated on the epsilon-amino group of Lys-34 by the combined action of EpmA and EpmB, and then hydroxylated on the C5 position of the same residue by EpmC (if this protein is present). Lysylation is critical for the stimulatory effect of EF-P on peptide-bond formation. The lysylation moiety may extend toward the peptidyltransferase center and stabilize the terminal 3-CCA end of the tRNA. Hydroxylation of the C5 position on Lys-34 may allow additional potential stabilizing hydrogen-bond interactions with the P-tRNA.

The protein resides in the cytoplasm. The protein operates within protein biosynthesis; polypeptide chain elongation. Functionally, involved in peptide bond synthesis. Alleviates ribosome stalling that occurs when 3 or more consecutive Pro residues or the sequence PPG is present in a protein, possibly by augmenting the peptidyl transferase activity of the ribosome. Modification of Lys-34 is required for alleviation. The protein is Elongation factor P of Stenotrophomonas maltophilia (strain K279a).